Consider the following 464-residue polypeptide: tRNA-2-methylthio-N(6)-dimethylallyladenosine synthase (464 aa).

In terms of domain architecture, MTTase N-terminal spans 5 to 122; that stretch reads RKLYVKSFGC…LPEMLARVRD (118 aa). [4Fe-4S] cluster contacts are provided by Cys14, Cys50, Cys85, Cys163, Cys167, and Cys170. The Radical SAM core domain occupies 149–383; that stretch reads KKRGPTAFVT…VLEASKTAFD (235 aa). In terms of domain architecture, TRAM spans 384 to 446; that stretch reads RACMGRRFDI…PNSLAGQVVD (63 aa).

The protein belongs to the methylthiotransferase family. MiaB subfamily. Monomer. [4Fe-4S] cluster serves as cofactor.

It localises to the cytoplasm. It catalyses the reaction N(6)-dimethylallyladenosine(37) in tRNA + (sulfur carrier)-SH + AH2 + 2 S-adenosyl-L-methionine = 2-methylsulfanyl-N(6)-dimethylallyladenosine(37) in tRNA + (sulfur carrier)-H + 5'-deoxyadenosine + L-methionine + A + S-adenosyl-L-homocysteine + 2 H(+). In terms of biological role, catalyzes the methylthiolation of N6-(dimethylallyl)adenosine (i(6)A), leading to the formation of 2-methylthio-N6-(dimethylallyl)adenosine (ms(2)i(6)A) at position 37 in tRNAs that read codons beginning with uridine. The protein is tRNA-2-methylthio-N(6)-dimethylallyladenosine synthase of Azorhizobium caulinodans (strain ATCC 43989 / DSM 5975 / JCM 20966 / LMG 6465 / NBRC 14845 / NCIMB 13405 / ORS 571).